We begin with the raw amino-acid sequence, 638 residues long: ATP-dependent zinc metalloprotease FtsH (638 aa).

Over 1–4 (MNNQ) the chain is Cytoplasmic. Residues 5-25 (GKNIIVWAVIFVFVILLFNVF) form a helical membrane-spanning segment. Topologically, residues 26–103 (QSDGLLSSKN…VVPPETRMNT (78 aa)) are periplasmic. A helical membrane pass occupies residues 104–124 (FLSFLISWFPMLLLIGVWVFF). At 125 to 638 (MRQMHGGGKA…PIKAKKEDKS (514 aa)) the chain is on the cytoplasmic side. 195–202 (GPPGTGKT) provides a ligand contact to ATP. H417 serves as a coordination point for Zn(2+). E418 is a catalytic residue. 2 residues coordinate Zn(2+): H421 and D495. Residues 523–544 (SASEDMYTNRNSSSDRSESTSE) form a disordered region.

This sequence in the central section; belongs to the AAA ATPase family. In the C-terminal section; belongs to the peptidase M41 family. Homohexamer. Zn(2+) is required as a cofactor.

Its subcellular location is the cell inner membrane. In terms of biological role, acts as a processive, ATP-dependent zinc metallopeptidase for both cytoplasmic and membrane proteins. Plays a role in the quality control of integral membrane proteins. The chain is ATP-dependent zinc metalloprotease FtsH from Rickettsia bellii (strain RML369-C).